Consider the following 223-residue polypeptide: MTEVLDLHGQDSDGGSEEMVLTPAELIEKLEQAWMNEKFAPELLESKAEIVECVMEQLEHMEENLRRAKKGDLKVSIHRMEMERIRYVLSSYLRCRLMKIEKFFPHILEKEKVRSEGEPSSLSPEEFVFAKEYMDHTETHFKNVALKHMPPNLQKVDLLRAVPKPDLDSYVFLRVKERQENILVEPEADEQRDYVIDLEVGSQHLIRYKTIAPLVASGAVQLI.

Methionine 1 carries the post-translational modification N-acetylmethionine. Threonine 2 carries the N-acetylthreonine; in DNA replication complex GINS protein SLD5, N-terminally processed modification. Phosphoserine is present on residues serine 12 and serine 16. The important for GINS complex assembly stretch occupies residues 166–223 (DLDSYVFLRVKERQENILVEPEADEQRDYVIDLEVGSQHLIRYKTIAPLVASGAVQLI).

It belongs to the GINS4/SLD5 family. Component of the CMG helicase complex, a hexameric ring of related MCM2-7 subunits stabilized by CDC45 and the tetrameric GINS complex. Associated with ORC2. Interacts with HELB. In terms of tissue distribution, highly abundant in testis. Weakly expressed in thymus and bone marrow.

The protein localises to the nucleus. It is found in the chromosome. It localises to the cytoplasm. Its function is as follows. Required for initiation of chromosomal DNA replication. Core component of CDC45-MCM-GINS (CMG) helicase, the molecular machine that unwinds template DNA during replication, and around which the replisome is built. The chain is DNA replication complex GINS protein SLD5 (Gins4) from Mus musculus (Mouse).